A 164-amino-acid chain; its full sequence is Cyanate hydratase (164 aa).

Catalysis depends on residues arginine 90, glutamate 93, and serine 116.

It belongs to the cyanase family.

It carries out the reaction cyanate + hydrogencarbonate + 3 H(+) = NH4(+) + 2 CO2. Catalyzes the reaction of cyanate with bicarbonate to produce ammonia and carbon dioxide. This Vitis vinifera (Grape) protein is Cyanate hydratase.